We begin with the raw amino-acid sequence, 608 residues long: MGKVIGIDLGTTNSCVAVMEGGEPVVIPNSEGSRTTPSVVAFTKNNERLVGQVAKRQAITNPERTIISIKRDMGTDKRVKIDDKSYTPQEISAMILQKIKADAEAYLGEKVTQAVITVPAYFSDSQRQATKDAGRIAGLEVLRIINEPTAAALAYGLDKESDQKILVFDLGGGTFDVSILEIGDGVFEVLATSGNNRLGGDDFDQRIIDYLIDLFKKEHGIDLSTDKMAMQRLKEAAEKAKIELSGVTTTNINLPFITADANGPKHLDVTLTRAKFEELTADLVEKTMEPTRRALEDSGLTPDKIDKILLVGGSTRIPAVQEAVRKFFGKEPFKGINPDECVAIGAAIQAGVLTGEVKDLLLLDVTPLSLGIETLGGVFTKLIERNTTIPTKKSQIFSTAADGQTAVTVRVFQGERAMAADNKLLGEFTLDGIPPAPKGVPQIEVTFDIDANGIVHVSAKDLGTGKEQHITITASTNLSEAEIEKAINEAKKYEEEDRKRKESAETRNNADSMVFQAEKTLKDLGDKLSSEDKAKIEAEIEKVREALKGTDTQAIKKATEDLQQAFYSVSAKIYQQGQAAGANPGAQTTGGEQGNVYDAEYKVVDDDK.

A Phosphothreonine; by autocatalysis modification is found at Thr174. Residues 493–505 (YEEEDRKRKESAE) show a composition bias toward basic and acidic residues. 2 disordered regions span residues 493–514 (YEEE…DSMV) and 577–608 (GQAA…DDDK). The span at 577–590 (GQAAGANPGAQTTG) shows a compositional bias: low complexity. Basic and acidic residues predominate over residues 599-608 (AEYKVVDDDK).

It belongs to the heat shock protein 70 family.

Its function is as follows. Acts as a chaperone. This is Chaperone protein DnaK from Acetivibrio thermocellus (strain ATCC 27405 / DSM 1237 / JCM 9322 / NBRC 103400 / NCIMB 10682 / NRRL B-4536 / VPI 7372) (Clostridium thermocellum).